A 78-amino-acid chain; its full sequence is Large ribosomal subunit protein bL28 (78 aa).

The protein belongs to the bacterial ribosomal protein bL28 family.

The protein is Large ribosomal subunit protein bL28 of Prochlorococcus marinus (strain MIT 9303).